We begin with the raw amino-acid sequence, 29 residues long: Kalata-B15 (29 aa).

The segment at residues 1–29 is a cross-link (cyclopeptide (Gly-Asp)); sequence GLPVCGESCFGGSCYTPGCSCTWPICTRD. Intrachain disulfides connect Cys5-Cys19, Cys9-Cys21, and Cys14-Cys26.

In terms of processing, this is a cyclic peptide.

In terms of biological role, probably participates in a plant defense mechanism. This Oldenlandia affinis protein is Kalata-B15.